The sequence spans 506 residues: (+)-piperitol/(+)-sesamin synthase CYP81Q2 (506 aa).

A helical transmembrane segment spans residues 3-23; sequence AEMLYSALALTFAIFMVYRIL. C439 provides a ligand contact to heme.

Belongs to the cytochrome P450 family. Heme serves as cofactor. Expressed in seeds.

The protein resides in the membrane. It catalyses the reaction (+)-piperitol + reduced [NADPH--hemoprotein reductase] + O2 = (+)-sesamin + oxidized [NADPH--hemoprotein reductase] + 2 H2O + H(+). It carries out the reaction (+)-pinoresinol + reduced [NADPH--hemoprotein reductase] + O2 = (+)-piperitol + oxidized [NADPH--hemoprotein reductase] + 2 H2O + H(+). Involved in the biosynthesis of (+)-sesamin, a furofuran class lignan. Functions in a dual catalytic mode. Catalyzes the synthesis of (+)-sesamin from (+)- pinoresinol by formation of two successive methylenedioxy bridges on (+)-pinoresinol and (+)-piperitol, respectively. This Sesamum radiatum (Black benniseed) protein is (+)-piperitol/(+)-sesamin synthase CYP81Q2.